The chain runs to 222 residues: Collectrin (222 aa).

Residues 1–14 (MLWLLFFLVTAIHA) form the signal peptide. The Extracellular portion of the chain corresponds to 15 to 141 (ELCQPGAENA…LAPPMDPSVP (127 aa)). Residues 21-222 (AENAFKVRLS…MTEDERLTPL (202 aa)) form the Collectrin-like domain. Residues asparagine 76 and asparagine 93 are each glycosylated (N-linked (GlcNAc...) asparagine). Residues 142 to 162 (IWIIIFGVIFCIIIVAIALLI) form a helical membrane-spanning segment. The Cytoplasmic segment spans residues 163-222 (LSGIWQRRRKNKEPSEVDDAEDKCENMITIENGIPSDPLDMKGGHINDAFMTEDERLTPL). Threonine 214 and threonine 220 each carry phosphothreonine.

This sequence belongs to the CLTRN family. As to quaternary structure, monomer. Homodimer; dimerization prevents CLTRN cleavage by BACE2. Interacts with SLC6A18; this interaction regulates the trafficking of SLC6A18 to the cell membrane and its amino acid transporter activity. Interacts with SLC6A19; this interaction regulates the trafficking of SLC6A19 to the cell membrane and its amino acid transporter activity. Interacts with SNAPIN. Post-translationally, glycosylated. Glycosylation is required for plasma membrane localization and for its cleavage by BACE2. In terms of processing, proteolytically processed in pancreatic beta cells by BACE2 leading to the generation and extracellular release of soluble CLTRN, and a corresponding cell-associated C-terminal fragment which is later cleaved by gamma-secretase. This shedding process inactivates CLTRN. Three cleavage sites have been identified for BACE2, two clustered sites after Phe-116 and Leu-118 and a more membrane proximal site at Phe-125; the preferred BACE2 cleavage site seems to be between Phe-125 and Leu-126, Phe-116 and Leu-118 act as alternative sites. In terms of tissue distribution, kidney; collecting ducts. Pancreas; beta cells of islets.

Its subcellular location is the cell membrane. Functionally, plays an important role in amino acid transport by acting as binding partner of amino acid transporters SLC6A18 and SLC6A19, regulating their trafficking on the cell surface and their amino acid transporter activity. May also play a role in trafficking of amino acid transporters SLC3A1 and SLC7A9 to the renal cortical cell membrane. Regulator of SNARE complex function. Stimulator of beta cell replication. The protein is Collectrin of Homo sapiens (Human).